The primary structure comprises 167 residues: MASAEPLTALSRWYLYAIHGYFCEVMFTAAWEFVVNFNWKFPGVTSVWALFIYGTSILIVERMYLRLRGRCPLLVRCVIYTLWTYLWEFTTGFILRQFNACPWDYSQFDFDFMGLITLEYAVPWFCGALIMEQFIIRNTLRLRFDKDAEPGEPASPPALANGHVKTD.

At 1–14 (MASAEPLTALSRWY) the chain is on the cytoplasmic side. A helical transmembrane segment spans residues 15 to 35 (LYAIHGYFCEVMFTAAWEFVV). The Extracellular portion of the chain corresponds to 36 to 40 (NFNWK). Residues 41–61 (FPGVTSVWALFIYGTSILIVE) form a helical membrane-spanning segment. Residues 62-73 (RMYLRLRGRCPL) are Cytoplasmic-facing. The chain crosses the membrane as a helical span at residues 74-94 (LVRCVIYTLWTYLWEFTTGFI). At 95–109 (LRQFNACPWDYSQFD) the chain is on the extracellular side. The helical transmembrane segment at 110–130 (FDFMGLITLEYAVPWFCGALI) threads the bilayer. The Cytoplasmic portion of the chain corresponds to 131 to 167 (MEQFIIRNTLRLRFDKDAEPGEPASPPALANGHVKTD). Positions 148–167 (AEPGEPASPPALANGHVKTD) are disordered.

Belongs to the TMEM229 family.

It localises to the membrane. This chain is Transmembrane protein 229B (TMEM229B), found in Mus musculus (Mouse).